The following is a 316-amino-acid chain: Coproporphyrin III ferrochelatase (316 aa).

Fe-coproporphyrin III is bound by residues tyrosine 13, arginine 30, 46–47 (RY), serine 54, and tyrosine 125. Fe(2+)-binding residues include histidine 183 and glutamate 264.

Belongs to the ferrochelatase family.

The protein localises to the cytoplasm. It catalyses the reaction Fe-coproporphyrin III + 2 H(+) = coproporphyrin III + Fe(2+). It functions in the pathway porphyrin-containing compound metabolism; protoheme biosynthesis. Functionally, involved in coproporphyrin-dependent heme b biosynthesis. Catalyzes the insertion of ferrous iron into coproporphyrin III to form Fe-coproporphyrin III. This Geobacillus kaustophilus (strain HTA426) protein is Coproporphyrin III ferrochelatase.